Consider the following 217-residue polypeptide: Enoyl-CoA-hydratase (217 aa).

It belongs to the enoyl-CoA hydratase/isomerase family.

The enzyme catalyses a (3S)-3-hydroxyacyl-CoA = a (2E)-enoyl-CoA + H2O. It catalyses the reaction a 4-saturated-(3S)-3-hydroxyacyl-CoA = a (3E)-enoyl-CoA + H2O. It participates in antibiotic biosynthesis; vancomycin biosynthesis. Involved in the biosynthesis of the nonproteinogenic amino acid monomer (S)-3,5-dihydroxyphenylglycine (Dpg) responsible of the production of vancomycin and teicoplanin antibiotics. Catalyzes the syn-addition of a water molecule across the double bond of a trans-2-enoyl-CoA thioester, resulting in the formation of a beta-hydroxyacyl-CoA thioester. Physiologically, DpgB could act as a dehydratase, facilitating the aromatization of the DPA-S-DgpA or DPA-S-CoA intermediate. This Amycolatopsis orientalis (Nocardia orientalis) protein is Enoyl-CoA-hydratase (dpgB).